The chain runs to 489 residues: Pluviatolide synthase (489 aa).

Residues 6–26 (SVLAMSSTLILALAMALIFLF) form a helical membrane-spanning segment. Position 432 (cysteine 432) interacts with heme.

The protein belongs to the cytochrome P450 family. Heme serves as cofactor. As to expression, expressed in leaves, rhizomes and stems.

The protein resides in the membrane. It carries out the reaction (-)-matairesinol + reduced [NADPH--hemoprotein reductase] + O2 = (-)-pluviatolide + oxidized [NADPH--hemoprotein reductase] + 2 H2O + H(+). Its pathway is aromatic compound metabolism; phenylpropanoid biosynthesis. In terms of biological role, cytochrome P450 involved in the biosynthesis of etoposide, a chemotherapeutic compound of the topoisomerase inhibitor family. Catalyzes the conversion of matairesinol to pluviatolide. The sequence is that of Pluviatolide synthase from Sinopodophyllum hexandrum (Himalayan may apple).